Here is a 187-residue protein sequence, read N- to C-terminus: UPF0301 protein HS_0009 (187 aa).

This sequence belongs to the UPF0301 (AlgH) family.

The chain is UPF0301 protein HS_0009 from Histophilus somni (strain 129Pt) (Haemophilus somnus).